Consider the following 122-residue polypeptide: Large ribosomal subunit protein uL14 (122 aa).

The protein belongs to the universal ribosomal protein uL14 family. Part of the 50S ribosomal subunit. Forms a cluster with proteins L3 and L19. In the 70S ribosome, L14 and L19 interact and together make contacts with the 16S rRNA in bridges B5 and B8.

In terms of biological role, binds to 23S rRNA. Forms part of two intersubunit bridges in the 70S ribosome. The protein is Large ribosomal subunit protein uL14 of Aliarcobacter butzleri (strain RM4018) (Arcobacter butzleri).